The chain runs to 173 residues: Trafficking regulator of GLUT4 1 (173 aa).

Residues 1–10 (MANPAQPPLQ) show a composition bias toward pro residues. Residues 1–20 (MANPAQPPLQDPGSTSPLEL) are disordered. The Cytoplasmic segment spans residues 1–102 (MANPAQPPLQ…QDQEAPKDYL (102 aa)). Phosphoserine is present on residues Ser-16, Ser-43, Ser-45, Ser-70, Ser-84, and Ser-85. Positions 103–123 (VLAIASCFCPVWPLNLIPLIF) form an intramembrane region, helical. Over 124–150 (SIMSRSSVQQGDLDGARRLGRLARLLS) the chain is Cytoplasmic. Residues 151 to 171 (ITFIILGIVIIIVAVTVNFTV) traverse the membrane as a helical segment. Residues 172 to 173 (PK) are Extracellular-facing.

This sequence belongs to the CD225/Dispanin family. Interacts with SLC2A4; the interaction is required for proper SLC2A4 reacycling after insulin stimulation. In terms of tissue distribution, expressed specifically in white and brown adipose tissues.

It is found in the cell membrane. The protein localises to the endomembrane system. It localises to the cytoplasm. Its subcellular location is the perinuclear region. Its function is as follows. Regulates insulin-mediated adipose tissue glucose uptake and transport by modulation of SLC2A4 recycling. Not required for SLC2A4 membrane fusion upon an initial stimulus, but rather is necessary for proper protein recycling during prolonged insulin stimulation. The chain is Trafficking regulator of GLUT4 1 (Trarg1) from Mus musculus (Mouse).